We begin with the raw amino-acid sequence, 217 residues long: ATP phosphoribosyltransferase (217 aa).

Belongs to the ATP phosphoribosyltransferase family. Short subfamily. As to quaternary structure, heteromultimer composed of HisG and HisZ subunits.

The protein resides in the cytoplasm. It catalyses the reaction 1-(5-phospho-beta-D-ribosyl)-ATP + diphosphate = 5-phospho-alpha-D-ribose 1-diphosphate + ATP. It functions in the pathway amino-acid biosynthesis; L-histidine biosynthesis; L-histidine from 5-phospho-alpha-D-ribose 1-diphosphate: step 1/9. Functionally, catalyzes the condensation of ATP and 5-phosphoribose 1-diphosphate to form N'-(5'-phosphoribosyl)-ATP (PR-ATP). Has a crucial role in the pathway because the rate of histidine biosynthesis seems to be controlled primarily by regulation of HisG enzymatic activity. This Burkholderia ambifaria (strain MC40-6) protein is ATP phosphoribosyltransferase.